The chain runs to 1183 residues: Formin-like protein (1183 aa).

Disordered stretches follow at residues 1 to 44 and 63 to 82; these read MGAV…SISS and QHVRQPSLRSRSQQPMPTTD. Over residues 23–36 the composition is skewed to basic residues; that stretch reads PHSHAHHHSMRNGH. Positions 63–79 are enriched in polar residues; sequence QHVRQPSLRSRSQQPMP. Residues 76–559 form the GBD/FH3 domain; it reads QPMPTTDELD…HNEQELKKRD (484 aa). S225 is modified (phosphoserine). The span at 572–584 shows a compositional bias: polar residues; that stretch reads LSRSLPRSASSGD. The segment at 572–681 is disordered; sequence LSRSLPRSAS…PPVAGFMPAP (110 aa). 2 stretches are compositionally biased toward pro residues: residues 605 to 614 and 622 to 640; these read LPPPPPPMPA and APPPPPPPAPPAPPPPPGF. Residues 641–654 are compositionally biased toward low complexity; the sequence is SPLGSPSGSLASTA. The region spanning 687-1088 is the FH2 domain; the sequence is IKRKVPTKYK…AALAASKKEN (402 aa). The DAD domain occupies 1136 to 1169; it reads DEVYNGALEDILLGLKSEPYRRADAVRRSQRRRI.

It belongs to the formin homology family. In terms of assembly, self-associates. Interacts (via GBD/FH3 domain) with Cdc42; the interaction is stronger with the GTP bound form of Cdc42.

Its function is as follows. Together with Cdc42, involved in establishment of planar cell polarity in the developing compound eye by contributing to ommatidial rotation. Together with DAAM and Cdc42, has a role in neuronal development of mushroom bodies. This chain is Formin-like protein, found in Drosophila melanogaster (Fruit fly).